Reading from the N-terminus, the 900-residue chain is Zinc finger protein 62 homolog (900 aa).

Residues 1–97 (MSHLKTSTED…EASEKSLHLS (97 aa)) are disordered. Lys5 is covalently cross-linked (Glycyl lysine isopeptide (Lys-Gly) (interchain with G-Cter in SUMO2)). Residues 9–18 (EDEEPTEEYE) show a composition bias toward acidic residues. Residues 47–73 (SKVENQQKKPVENRMKEDKSSIREAIS) show a composition bias toward basic and acidic residues. Residues Lys48, Lys62, Lys65, Lys82, and Lys92 each participate in a glycyl lysine isopeptide (Lys-Gly) (interchain with G-Cter in SUMO2) cross-link. Residues 83–94 (TEQEGEASEKSL) are compositionally biased toward basic and acidic residues. C2H2-type zinc fingers lie at residues 225–247 (CKCD…KRIH), 253–275 (YECG…KRIH), 281–303 (YECD…KRIH), 309–331 (YECD…KSIH), 337–359 (YKCD…KVIH), 365–387 (YECD…KRIH), 393–415 (YKCD…KSIH), 421–443 (HECK…RTIH), 449–471 (YVCD…RRLH), 477–499 (YKCD…KGIH), 505–527 (YKCS…KRIH), 533–555 (FGCD…KRIH), and 561–583 (YKCE…KSVH). Lys587 participates in a covalent cross-link: Glycyl lysine isopeptide (Lys-Gly) (interchain with G-Cter in SUMO2). 10 C2H2-type zinc fingers span residues 589–611 (FKCD…KKVH), 617–639 (YKCD…RRVH), 645–667 (YECD…KRIH), 673–695 (YECD…KSTH), 701–723 (HTCD…KRVH), 729–751 (FKCV…KRIH), 757–779 (YVCD…KRIH), 785–807 (YECD…KSVH), 813–834 (YNCE…KRIH), and 840–862 (YRCN…KRTH). A Glycyl lysine isopeptide (Lys-Gly) (interchain with G-Cter in SUMO2) cross-link involves residue Lys748. Lys882 is covalently cross-linked (Glycyl lysine isopeptide (Lys-Gly) (interchain with G-Cter in SUMO2)).

The protein belongs to the krueppel C2H2-type zinc-finger protein family.

It localises to the nucleus. In terms of biological role, may play a role in differentiating skeletal muscle. This is Zinc finger protein 62 homolog (ZFP62) from Homo sapiens (Human).